Here is a 1167-residue protein sequence, read N- to C-terminus: MRKKQKLPFDKLAIALMSTSILLNAQSDIKANTVTEDTPVTEQAVETPQPTAVSEEVPSSKETKTPQTPDDAEETIADDANDLAPQAPAKTADTPATSKATIRDLNDPSQVKTLQEKAGKGAGTVVAVIDAGFDKNHEAWRLTDKTKARYQSKEDLEKAKKEHGITYGEWVNDKVAYYHDYSKDGKTAVDQEHGTHVSGILSGNAPSETKEPYRLEGAMPEAQLLLMRVEIVNGLADYARNYAQAIRDAVNLGAKVINMSFGNAALAYANLPDETKKAFDYAKSKGVSIVTSAGNDSSFGGKTRLPLADHPDYGVVGTPAAADSTLTVASYSPDKQLTETAMVKTDDQQDKEMPVLSTNRFEPNKAYDYAYANRGMKEDDFKDVKGKIALIERGDIDFKDKVANAKKAGAVGVLIYDNQDKGFPIELPNVDQMPAAFISRKDGLLLKDNPQKTITFNATPKVLPTASGTKLSRFSSWGLTADGNIKPDIAAPGQDILSSVANNKYAKLSGTSMSAPLVAGIMGLLQKQYETQYPDMTPSERLDLAKKVLMSSATALYDEDEKAYFSPRQQGAGAVDAKKASAATMYVTDKDNTSSKVHLNNVSDKFEVTVTVHNKSDKPQELYYQATVQTDKVDGKHFALAPKVLYEASWQKITIPANSSKQVTVPIDASRFSKDLLAQMKNGYFLEGFVRFKQDPTKEELMSIPYIGFRGDFGNLSAVEKPIYDSKDGSSYYHEANSDAKDQLDGDGLQFYALKNNFTALTTESNPWTIIKAVKEGVENIEDIESSEITETIFAGTFAKQDDDSHYYIHRHANGEPYAAISPNGDGNRDYVQFQGTFLRNAKNLVAEVLDKEGNVVWTSEVTEQVVKNYNNDLASTLGSTRFEKTRWDGKDKDGKVVANGTYTYRVRYTPISSGAKEQHTDFDVIVDNTTPEVATSATFSTEDRRLTLASKPKTSQPVYRERIAYTYMDEDLPTTEYISPNEDGTFTLPEEAETMEGATVPLKMSDFTYVVEDMAGNITYTPVTKLLEGHSNKPEQDGSGQTPDKKPEAKPEQDGSDQAPDKKPEAKPEQDGSGQTPDKKPETKPEKDSSGQTPGKTPQKGQPSRTLEKRSSKRALATKASTRDQLPTTNDKDTNRLHLLKLVMTTFFFGLVAHIFKTKRQKETKK.

The signal sequence occupies residues 1-31; the sequence is MRKKQKLPFDKLAIALMSTSILLNAQSDIKA. Polar residues predominate over residues 34–52; that stretch reads VTEDTPVTEQAVETPQPTA. The disordered stretch occupies residues 34–73; the sequence is VTEDTPVTEQAVETPQPTAVSEEVPSSKETKTPQTPDDAE. The 483-residue stretch at 99–581 folds into the Peptidase S8 domain; it reads KATIRDLNDP…AGAVDAKKAS (483 aa). Residues D130, H193, and S512 each act as charge relay system in the active site. The disordered stretch occupies residues 1029 to 1133; it reads EGHSNKPEQD…RDQLPTTNDK (105 aa). 4 consecutive repeat copies span residues 1034 to 1050, 1051 to 1067, 1068 to 1084, and 1085 to 1101. The 4 X 17 AA tandem repeats stretch occupies residues 1034–1101; the sequence is KPEQDGSGQT…GQTPGKTPQK (68 aa). 2 stretches are compositionally biased toward basic and acidic residues: residues 1044–1071 and 1078–1090; these read PDKKPEAKPEQDGSDQAPDKKPEAKPEQ and PDKKPETKPEKDS. 2 stretches are compositionally biased toward polar residues: residues 1092–1106 and 1120–1130; these read GQTPGKTPQKGQPSR and KASTRDQLPTT. The LPXTG sorting signal signature appears at 1127–1131; it reads LPTTN. Pentaglycyl murein peptidoglycan amidated threonine is present on T1130. Positions 1131 to 1167 are cleaved as a propeptide — removed by sortase; it reads NDKDTNRLHLLKLVMTTFFFGLVAHIFKTKRQKETKK.

The protein belongs to the peptidase S8 family. Cleaved by SpeB protease; leading to its degradation. Degradation by SpeB is probably strictly regulated to preserve integrity of C5a peptidase.

The protein localises to the secreted. It localises to the cell wall. The enzyme catalyses The primary cleavage site is at 67-His-|-Lys-68 in human C5a with a minor secondary cleavage site at 58-Ala-|-Ser-59.. This virulence factor of S.pyogenes specifically cleaves the human serum chemotaxin C5a at '68-Lys-|-Asp-69' bond near its C-terminus, destroying its ability to serve as a chemoattractant. This chain is C5a peptidase (scpA), found in Streptococcus pyogenes.